The chain runs to 675 residues: UvrABC system protein B (675 aa).

One can recognise a Helicase ATP-binding domain in the interval glutamate 35 to arginine 422. Glycine 48–threonine 55 lines the ATP pocket. The Beta-hairpin motif lies at tyrosine 101–isoleucine 124. A Helicase C-terminal domain is found at glutamine 439 to isoleucine 605. The 36-residue stretch at alanine 633–arginine 668 folds into the UVR domain.

This sequence belongs to the UvrB family. In terms of assembly, forms a heterotetramer with UvrA during the search for lesions. Interacts with UvrC in an incision complex.

The protein localises to the cytoplasm. The UvrABC repair system catalyzes the recognition and processing of DNA lesions. A damage recognition complex composed of 2 UvrA and 2 UvrB subunits scans DNA for abnormalities. Upon binding of the UvrA(2)B(2) complex to a putative damaged site, the DNA wraps around one UvrB monomer. DNA wrap is dependent on ATP binding by UvrB and probably causes local melting of the DNA helix, facilitating insertion of UvrB beta-hairpin between the DNA strands. Then UvrB probes one DNA strand for the presence of a lesion. If a lesion is found the UvrA subunits dissociate and the UvrB-DNA preincision complex is formed. This complex is subsequently bound by UvrC and the second UvrB is released. If no lesion is found, the DNA wraps around the other UvrB subunit that will check the other stand for damage. The protein is UvrABC system protein B of Bordetella bronchiseptica (strain ATCC BAA-588 / NCTC 13252 / RB50) (Alcaligenes bronchisepticus).